Consider the following 179-residue polypeptide: Bifunctional protein PyrR (179 aa).

A PRPP-binding motif is present at residues 100–112; that stretch reads VILIDDVLFTGRT.

This sequence belongs to the purine/pyrimidine phosphoribosyltransferase family. PyrR subfamily.

It carries out the reaction UMP + diphosphate = 5-phospho-alpha-D-ribose 1-diphosphate + uracil. Regulates the transcription of the pyrimidine nucleotide (pyr) operon in response to exogenous pyrimidines. In terms of biological role, also displays a weak uracil phosphoribosyltransferase activity which is not physiologically significant. The chain is Bifunctional protein PyrR from Mannheimia succiniciproducens (strain KCTC 0769BP / MBEL55E).